A 486-amino-acid chain; its full sequence is N-succinylglutamate 5-semialdehyde dehydrogenase (486 aa).

Position 220–225 (220–225 (GSSRTG)) interacts with NAD(+). Catalysis depends on residues glutamate 243 and cysteine 277.

It belongs to the aldehyde dehydrogenase family. AstD subfamily.

It carries out the reaction N-succinyl-L-glutamate 5-semialdehyde + NAD(+) + H2O = N-succinyl-L-glutamate + NADH + 2 H(+). It participates in amino-acid degradation; L-arginine degradation via AST pathway; L-glutamate and succinate from L-arginine: step 4/5. In terms of biological role, catalyzes the NAD-dependent reduction of succinylglutamate semialdehyde into succinylglutamate. In Shewanella piezotolerans (strain WP3 / JCM 13877), this protein is N-succinylglutamate 5-semialdehyde dehydrogenase.